The primary structure comprises 128 residues: Z-ring associated protein G (128 aa).

A helical transmembrane segment spans residues 7–27 (EIWFSISIAFLIGTLCGVLVM). The stretch at 37 to 75 (QIQLKSELASAEAKIEEQKQQLERHFEQSANLLENLAED) forms a coiled coil. A disordered region spans residues 105–128 (NHANGDEDNQPRDYSDGSSGLLKS). The segment covering 107-119 (ANGDEDNQPRDYS) has biased composition (basic and acidic residues).

It belongs to the ZapG family. As to quaternary structure, homotetramer. In solution, is primarily monomeric but forms small amounts of stable tetramer and hexadecamer. The crystal structure of the cytosolic region shows a coiled-coil tetramer in the asymmetric unit that is very likely to be a physiologically relevant assembly of the protein.

The protein resides in the cell inner membrane. Its function is as follows. Involved in cell division, cell envelope biogenesis and cell shape maintenance. This Haemophilus ducreyi (strain 35000HP / ATCC 700724) protein is Z-ring associated protein G.